We begin with the raw amino-acid sequence, 227 residues long: Enolase-phosphatase E1 (227 aa).

This sequence belongs to the HAD-like hydrolase superfamily. MasA/MtnC family. As to quaternary structure, monomer. Requires Mg(2+) as cofactor.

The enzyme catalyses 5-methylsulfanyl-2,3-dioxopentyl phosphate + H2O = 1,2-dihydroxy-5-(methylsulfanyl)pent-1-en-3-one + phosphate. It participates in amino-acid biosynthesis; L-methionine biosynthesis via salvage pathway; L-methionine from S-methyl-5-thio-alpha-D-ribose 1-phosphate: step 3/6. The protein operates within amino-acid biosynthesis; L-methionine biosynthesis via salvage pathway; L-methionine from S-methyl-5-thio-alpha-D-ribose 1-phosphate: step 4/6. Functionally, bifunctional enzyme that catalyzes the enolization of 2,3-diketo-5-methylthiopentyl-1-phosphate (DK-MTP-1-P) into the intermediate 2-hydroxy-3-keto-5-methylthiopentenyl-1-phosphate (HK-MTPenyl-1-P), which is then dephosphorylated to form the acireductone 1,2-dihydroxy-3-keto-5-methylthiopentene (DHK-MTPene). The sequence is that of Enolase-phosphatase E1 from Methylococcus capsulatus (strain ATCC 33009 / NCIMB 11132 / Bath).